The chain runs to 449 residues: Glutamyl-tRNA reductase (449 aa).

Residues 49–52, Ser-107, 112–114, and Gln-118 contribute to the substrate site; these read TCNR and EPQ. The Nucleophile role is filled by Cys-50. NADP(+) is bound at residue 187 to 192; it reads GAGETI. Residues 418 to 449 form a disordered region; it reads QLVERSSEGDDSQQAGADGGAARGDRRAAGGS. A compositionally biased stretch (basic and acidic residues) spans 440-449; sequence RGDRRAAGGS.

This sequence belongs to the glutamyl-tRNA reductase family. As to quaternary structure, homodimer.

The enzyme catalyses (S)-4-amino-5-oxopentanoate + tRNA(Glu) + NADP(+) = L-glutamyl-tRNA(Glu) + NADPH + H(+). It participates in porphyrin-containing compound metabolism; protoporphyrin-IX biosynthesis; 5-aminolevulinate from L-glutamyl-tRNA(Glu): step 1/2. Its function is as follows. Catalyzes the NADPH-dependent reduction of glutamyl-tRNA(Glu) to glutamate 1-semialdehyde (GSA). This is Glutamyl-tRNA reductase from Halorhodospira halophila (strain DSM 244 / SL1) (Ectothiorhodospira halophila (strain DSM 244 / SL1)).